The chain runs to 216 residues: MAAGPRNSVLLAFALLCLPWPQEVGTFPAMPLSSLFANAVLRAQHLHQLAADTYKEFERAYIPEGQRYSIQNAQAAFCFSETIPAPTGKDEAQQRSDVELLRFSLLLIQSWLGPVQFLSRVFTNSLVFGTSDRVYEKLKDLEEGIQALMRELEDGSPRGGQILKQTYDKFDTNLRSDDALLKNYGLLSCFKKDLHKAETYLRVMKCRRFVESSCAF.

The signal sequence occupies residues 1–26 (MAAGPRNSVLLAFALLCLPWPQEVGT). Residue histidine 45 coordinates Zn(2+). A disulfide bond links cysteine 78 and cysteine 189. At serine 131 the chain carries Phosphoserine. Glutamate 198 contributes to the Zn(2+) binding site. An intrachain disulfide couples cysteine 206 to cysteine 214.

The protein belongs to the somatotropin/prolactin family.

Its subcellular location is the secreted. Plays an important role in growth control. Its major role in stimulating body growth is to stimulate the liver and other tissues to secrete IGF1. It stimulates both the differentiation and proliferation of myoblasts. It also stimulates amino acid uptake and protein synthesis in muscle and other tissues. In Felis catus (Cat), this protein is Somatotropin (GH1).